Reading from the N-terminus, the 367-residue chain is dTDP-4-amino-4,6-dideoxy-D-glucose transaminase (367 aa).

Lysine 184 carries the N6-(pyridoxal phosphate)lysine modification.

The protein belongs to the DegT/DnrJ/EryC1 family. Pyridoxal 5'-phosphate is required as a cofactor.

It catalyses the reaction dTDP-4-amino-4,6-dideoxy-D-glucose + 2-oxoglutarate = dTDP-4-dehydro-6-deoxy-alpha-D-glucose + L-glutamate. Its pathway is bacterial outer membrane biogenesis; lipopolysaccharide biosynthesis. Its function is as follows. Catalyzes the conversion of dTDP-4-dehydro-6-deoxy-D-glucose (dTDP-D-Glc4O) to dTDP-4-amino-4,6-dideoxy-D-glucose (dTDP-D-Qui4N). L-glutamine can also be used as amino donor. In Shigella dysenteriae, this protein is dTDP-4-amino-4,6-dideoxy-D-glucose transaminase (vioA).